The following is a 679-amino-acid chain: Glycine--tRNA ligase beta subunit (679 aa).

This sequence belongs to the class-II aminoacyl-tRNA synthetase family. In terms of assembly, tetramer of two alpha and two beta subunits.

It localises to the cytoplasm. The enzyme catalyses tRNA(Gly) + glycine + ATP = glycyl-tRNA(Gly) + AMP + diphosphate. The polypeptide is Glycine--tRNA ligase beta subunit (glyS) (Bacillus subtilis (strain 168)).